The primary structure comprises 1514 residues: Mitogen-activated protein kinase-binding protein 1 (1514 aa).

N-acetylalanine is present on Ala2. WD repeat units lie at residues 88–129 (SSRK…QVAE), 132–173 (EHKY…VVAS), 175–213 (KVSS…TSKV), 276–315 (DSFT…FLST), 342–381 (ARYP…KVGK), 387–436 (YHSS…VHGS), 477–516 (DPRV…EMLK), 519–561 (AHDS…SLQQ), 565–606 (EHSS…DGVQ), 614–653 (VRKT…QKKL), 659–698 (GEDG…CVAT), and 701–740 (GHSE…TISM). 4 disordered regions span residues 748-804 (RQRQ…PALP), 880-925 (PSLQ…SQPC), 951-1256 (EDGI…SSMA), and 1299-1336 (DIPK…GLGK). Residues 789 to 800 (KEGEDEGTEEEL) are compositionally biased toward acidic residues. 2 stretches are compositionally biased toward polar residues: residues 905–925 (LETS…SQPC) and 961–971 (DNPTMDTSEFQ). Positions 996-1011 (DSACSVDYSSSCLSSP) are enriched in low complexity. The span at 1032 to 1048 (DLEEPAEGDEEEEEEEG) shows a compositional bias: acidic residues. Low complexity predominate over residues 1113 to 1126 (PSPSSSSLALMSRP). Composition is skewed to polar residues over residues 1188-1200 (SPFS…QSVH) and 1245-1256 (HSYQNPTTSSMA). Ser1198 is modified (phosphoserine).

In terms of assembly, can form homodimers (via C-terminus). Interacts (via C-terminus) with WDR62 (via C-terminus). Interacts with MAPK9. Interacts (via N-terminus) with NOD2; the interaction is enhanced in presence of muramyl dipeptide (MDP). Interacts with MAPK10. In terms of tissue distribution, expressed in intestinal mucosa, where it is detected in epithelial cells, endothelial cells, smooth muscle cells and immune cells, such as lymphocytes. Expressed in kidney.

It localises to the cytoplasm. It is found in the nucleus. Its subcellular location is the cytoskeleton. The protein resides in the spindle pole. Negative regulator of NOD2 function. It down-regulates NOD2-induced processes such as activation of NF-kappa-B signaling, IL8 secretion and antibacterial response. Involved in JNK signaling pathway. This Homo sapiens (Human) protein is Mitogen-activated protein kinase-binding protein 1 (MAPKBP1).